Consider the following 191-residue polypeptide: IMP cyclohydrolase (191 aa).

Belongs to the archaeal IMP cyclohydrolase family.

It carries out the reaction IMP + H2O = 5-formamido-1-(5-phospho-D-ribosyl)imidazole-4-carboxamide. It functions in the pathway purine metabolism; IMP biosynthesis via de novo pathway; IMP from 5-formamido-1-(5-phospho-D-ribosyl)imidazole-4-carboxamide: step 1/1. Functionally, catalyzes the cyclization of 5-formylamidoimidazole-4-carboxamide ribonucleotide to IMP. This Natronomonas pharaonis (strain ATCC 35678 / DSM 2160 / CIP 103997 / JCM 8858 / NBRC 14720 / NCIMB 2260 / Gabara) (Halobacterium pharaonis) protein is IMP cyclohydrolase.